The following is a 238-amino-acid chain: Formate dehydrogenase, cytochrome b556 subunit (238 aa).

Residues His-23 and His-62 each contribute to the heme b site. The next 4 membrane-spanning stretches (helical) occupy residues 23 to 43 (HWML…FFFP), 60 to 80 (AIHP…ALLY), 120 to 140 (MLFW…IIMW), and 155 to 175 (IAIL…LVHI). Residues His-160 and His-174 each coordinate heme b.

This sequence belongs to the formate dehydrogenase gamma subunit family. In terms of assembly, formate dehydrogenase is a membrane-bound complex, formed by subunits alpha, beta and gamma. The cofactor is heme.

It is found in the cell membrane. Allows to use formate as major electron donor during anaerobic respiration. Subunit gamma is probably the cytochrome b556(FDO) component of the formate dehydrogenase. The polypeptide is Formate dehydrogenase, cytochrome b556 subunit (fdxI) (Haemophilus influenzae (strain ATCC 51907 / DSM 11121 / KW20 / Rd)).